A 151-amino-acid polypeptide reads, in one-letter code: Protein NrdI (151 aa).

The protein belongs to the NrdI family.

In terms of biological role, probably involved in ribonucleotide reductase function. The sequence is that of Protein NrdI from Mycoplasmopsis pulmonis (strain UAB CTIP) (Mycoplasma pulmonis).